A 560-amino-acid polypeptide reads, in one-letter code: Probable sulfate transporter MT1781 (560 aa).

11 helical membrane passes run 29 to 49, 51 to 71, 79 to 99, 105 to 125, 138 to 158, 184 to 204, 207 to 227, 256 to 276, 333 to 353, 355 to 375, and 394 to 414; these read VLAGLTVAAYLIPQAMAYATV, GLPPAAGLWASIAPLAIYALL, IGPESATALMTAAVLAPMAAG, AVLAATLGLLVGLICLLAGTA, VLVGYMAGIALVMISSQLGTI, WPTFVLAMSVLALLTMLTRWA, APGPIIAVLAATMLVAVMSLD, ALIIPAAGIAIVTFTDGVLTA, LIALGLVVIVMVFASGLLAMF, IAALGALVVYAALRLIDLSEF, and AAVLGLGVFYGVLAAVALSIL. In terms of domain architecture, STAS spans 442–557; that stretch reads DYPQAKRVPG…MTLPTAVQAF (116 aa).

This sequence belongs to the SLC26A/SulP transporter (TC 2.A.53) family.

The protein resides in the cell membrane. The chain is Probable sulfate transporter MT1781 from Mycobacterium tuberculosis (strain CDC 1551 / Oshkosh).